Consider the following 467-residue polypeptide: UDP-N-acetylmuramoylalanine--D-glutamate ligase (467 aa).

121–127 (GTNGKST) contributes to the ATP binding site.

This sequence belongs to the MurCDEF family.

It is found in the cytoplasm. The enzyme catalyses UDP-N-acetyl-alpha-D-muramoyl-L-alanine + D-glutamate + ATP = UDP-N-acetyl-alpha-D-muramoyl-L-alanyl-D-glutamate + ADP + phosphate + H(+). It functions in the pathway cell wall biogenesis; peptidoglycan biosynthesis. Functionally, cell wall formation. Catalyzes the addition of glutamate to the nucleotide precursor UDP-N-acetylmuramoyl-L-alanine (UMA). The chain is UDP-N-acetylmuramoylalanine--D-glutamate ligase from Brucella abortus (strain 2308).